An 89-amino-acid chain; its full sequence is Small ribosomal subunit protein uS15 (89 aa).

This sequence belongs to the universal ribosomal protein uS15 family. Part of the 30S ribosomal subunit. Forms a bridge to the 50S subunit in the 70S ribosome, contacting the 23S rRNA.

Its function is as follows. One of the primary rRNA binding proteins, it binds directly to 16S rRNA where it helps nucleate assembly of the platform of the 30S subunit by binding and bridging several RNA helices of the 16S rRNA. In terms of biological role, forms an intersubunit bridge (bridge B4) with the 23S rRNA of the 50S subunit in the ribosome. The chain is Small ribosomal subunit protein uS15 from Ruegeria sp. (strain TM1040) (Silicibacter sp.).